The sequence spans 684 residues: Fidgetin-like protein 2 (684 aa).

The span at proline 27–alanine 41 shows a compositional bias: polar residues. Disordered regions lie at residues proline 27–serine 48, proline 99–serine 179, and leucine 292–methionine 403. Residues serine 160–serine 179 show a composition bias toward low complexity. Alanine 431 contacts ATP.

This sequence belongs to the AAA ATPase family. Requires Mg(2+) as cofactor. In terms of tissue distribution, highly expressed in vascular endothelial cells and neuronal cells.

The protein localises to the cytoplasm. It localises to the cell cortex. It catalyses the reaction ATP + H2O = ADP + phosphate + H(+). Functionally, microtubule-severing enzyme that negatively regulates cell migration and wound healing. In migrating cells, targets dynamic microtubules (MTs) at the leading edge and severs them, thereby suppressing motility. Negative regulator of axon regeneration that suppresses axonal growth by selectively severing dynamic MTs in the distal axon shaft and growth cone. Contributes to proper cell branching during endothelial and neuronal development. The sequence is that of Fidgetin-like protein 2 (fignl2) from Danio rerio (Zebrafish).